Consider the following 36-residue polypeptide: U14-myrmicitoxin-Tb1a (36 aa).

A signal peptide spans 1-23; that stretch reads MKIIKLITIFTMMATLMXXVANG. Residues 24–25 constitute a propeptide that is removed on maturation; it reads EP. Residue Q35 is modified to Glutamine amide.

In terms of tissue distribution, expressed by the venom gland.

Its subcellular location is the secreted. Functionally, venom protein with unknown function. Does not induce paralysis when a high dose is administered by intrathoracic injection into the blowfly Lucilia caesar. In Tetramorium bicarinatum (Tramp ant), this protein is U14-myrmicitoxin-Tb1a.